Reading from the N-terminus, the 376-residue chain is Protein FAM199X (376 aa).

The segment covering 237–253 (YIKEHSPRQRSTRESWK) has biased composition (basic and acidic residues). The tract at residues 237–350 (YIKEHSPRQR…QRQARKERLS (114 aa)) is disordered. Positions 255-300 (TSYSTASTSGVSGASVSSSSASMVSTASSTGSSGGNSASNSSANMS) are enriched in low complexity. A compositionally biased stretch (basic residues) spans 318–337 (DSKKRSKQRKLQQKALRKRQ). Residues 320–349 (KKRSKQRKLQQKALRKRQLKEQRQARKERL) are a coiled coil. Residues 338–349 (LKEQRQARKERL) are compositionally biased toward basic and acidic residues.

The protein belongs to the FAM199 family.

In Xenopus tropicalis (Western clawed frog), this protein is Protein FAM199X (fam199x).